The sequence spans 2147 residues: Large tegument protein deneddylase (2147 aa).

Residues methionine 1–glycine 233 are deubiquitination activity. One can recognise a Peptidase C76 domain in the interval isoleucine 3–aspartate 223. Active-site residues include cysteine 23, aspartate 156, and histidine 158. Disordered stretches follow at residues alanine 228–arginine 301, glutamate 1419–glutamate 1438, serine 1567–threonine 1589, and arginine 2034–glutamate 2072. Over residues serine 240–serine 261 the composition is skewed to low complexity. Threonine 292 is a region of interest (interaction with inner tegument protein). Residues alanine 2052–proline 2061 are compositionally biased toward basic and acidic residues.

The protein belongs to the herpesviridae large tegument protein family. In terms of assembly, interacts with host CUL1 and CUL4A; these interactions inhibit the E3 ligase activity of cullins. Interacts with inner tegument protein. Interacts with capsid vertex specific component CVC2. Interacts with the major capsid protein/MCP.

It localises to the virion tegument. The protein resides in the host cytoplasm. It is found in the host nucleus. It carries out the reaction Thiol-dependent hydrolysis of ester, thioester, amide, peptide and isopeptide bonds formed by the C-terminal Gly of ubiquitin (a 76-residue protein attached to proteins as an intracellular targeting signal).. Large tegument protein that plays multiple roles in the viral cycle. During viral entry, remains associated with the capsid while most of the tegument is detached and participates in the capsid transport toward the host nucleus. Plays a role in the routing of the capsid at the nuclear pore complex and subsequent uncoating. Within the host nucleus, acts as a deneddylase and promotes the degradation of nuclear CRLs (cullin-RING ubiquitin ligases) and thereby stabilizes nuclear CRL substrates, while cytoplasmic CRLs remain unaffected. These modifications prevent host cell cycle S-phase progression and create a favorable environment allowing efficient viral genome replication. Participates later in the secondary envelopment of capsids. Indeed, plays a linker role for the association of the outer viral tegument to the capsids together with the inner tegument protein. This chain is Large tegument protein deneddylase (M48), found in Mus musculus (Mouse).